The sequence spans 389 residues: Aspartate aminotransferase (389 aa).

2 residues coordinate L-aspartate: Gly34 and Asn171. Lys233 bears the N6-(pyridoxal phosphate)lysine mark. Arg362 is an L-aspartate binding site.

It belongs to the class-I pyridoxal-phosphate-dependent aminotransferase family. Homodimer. Requires pyridoxal 5'-phosphate as cofactor.

It localises to the cytoplasm. The enzyme catalyses L-aspartate + 2-oxoglutarate = oxaloacetate + L-glutamate. In Pyrococcus abyssi (strain GE5 / Orsay), this protein is Aspartate aminotransferase (aspC).